Consider the following 354-residue polypeptide: MAKATQDSNRPHKADVGSAIPNHDLPPIPGRYHADREELLEFYRRMLMIRRFEERCGQLYGLGLIAGFCHLYIGQEAVAVGLQAALQPGRDSVITGYREHGHMLAYGIDPKIVMAELTGRASGISHGKGGSMHMFSTEHKFFGGNGIVGAQVPLGAGLAFAHKYRNDGGCSAAYFGDGSANQGQVYEAYNMAALWKLPVIFVIENNGYAMGTSIQRANAHTALSERGAGFGIPALVVDGMDVLEVRGAATVAVDWVQAGKGPIILEMKTYRYRGHSMSDPARYRSREEVNDMKENHDPLDNLKKDLFAAGVPEAELVKLDEDIRQQVKEAADFAEKAPLPADEELYTNILVGKY.

The interval 1–29 (MAKATQDSNRPHKADVGSAIPNHDLPPIP) is disordered.

As to quaternary structure, heterodimer of an alpha and a beta chain. Requires thiamine diphosphate as cofactor.

It catalyses the reaction N(6)-[(R)-lipoyl]-L-lysyl-[protein] + pyruvate + H(+) = N(6)-[(R)-S(8)-acetyldihydrolipoyl]-L-lysyl-[protein] + CO2. Its function is as follows. The pyruvate dehydrogenase complex catalyzes the overall conversion of pyruvate to acetyl-CoA and CO(2). It contains multiple copies of three enzymatic components: pyruvate dehydrogenase (E1), dihydrolipoamide acetyltransferase (E2) and lipoamide dehydrogenase (E3). This Zymomonas mobilis subsp. mobilis (strain ATCC 31821 / ZM4 / CP4) protein is Pyruvate dehydrogenase E1 component subunit alpha (pdhA).